The primary structure comprises 174 residues: NADH-ubiquinone oxidoreductase chain 6 (174 aa).

6 helical membrane-spanning segments follow: residues 1–21 (MTYALFLLSVILVMGFVGFSS), 24–44 (SPIYGGLVLIISGAVGCAVIL), 47–67 (GGGYMGLMVFLIYLGGMMVVF), 86–106 (VEVLVSVLVGLVMEVGLVLWV), 111–131 (GVVVVVNFNSVGSWMIYEGEG), and 151–171 (WLVVVTGWTLFVGVYVVIEIA).

The protein belongs to the complex I subunit 6 family. In terms of assembly, core subunit of respiratory chain NADH dehydrogenase (Complex I) which is composed of 45 different subunits.

The protein localises to the mitochondrion inner membrane. The catalysed reaction is a ubiquinone + NADH + 5 H(+)(in) = a ubiquinol + NAD(+) + 4 H(+)(out). In terms of biological role, core subunit of the mitochondrial membrane respiratory chain NADH dehydrogenase (Complex I) which catalyzes electron transfer from NADH through the respiratory chain, using ubiquinone as an electron acceptor. Essential for the catalytic activity and assembly of complex I. This chain is NADH-ubiquinone oxidoreductase chain 6 (MT-ND6), found in Pongo abelii (Sumatran orangutan).